The following is a 179-amino-acid chain: Large ribosomal subunit protein uL6 (179 aa).

Belongs to the universal ribosomal protein uL6 family. In terms of assembly, part of the 50S ribosomal subunit.

This protein binds to the 23S rRNA, and is important in its secondary structure. It is located near the subunit interface in the base of the L7/L12 stalk, and near the tRNA binding site of the peptidyltransferase center. This is Large ribosomal subunit protein uL6 from Finegoldia magna (strain ATCC 29328 / DSM 20472 / WAL 2508) (Peptostreptococcus magnus).